The chain runs to 384 residues: Histidinol-phosphate aminotransferase 1 (384 aa).

Lysine 233 is modified (N6-(pyridoxal phosphate)lysine).

It belongs to the class-II pyridoxal-phosphate-dependent aminotransferase family. Histidinol-phosphate aminotransferase subfamily. In terms of assembly, homodimer. It depends on pyridoxal 5'-phosphate as a cofactor.

The catalysed reaction is L-histidinol phosphate + 2-oxoglutarate = 3-(imidazol-4-yl)-2-oxopropyl phosphate + L-glutamate. The protein operates within amino-acid biosynthesis; L-histidine biosynthesis; L-histidine from 5-phospho-alpha-D-ribose 1-diphosphate: step 7/9. This Thiobacillus denitrificans (strain ATCC 25259 / T1) protein is Histidinol-phosphate aminotransferase 1.